Here is a 193-residue protein sequence, read N- to C-terminus: dCTP deaminase (193 aa).

DCTP contacts are provided by residues arginine 110 to arginine 115, aspartate 128, valine 136 to glutamate 138, tyrosine 171, lysine 178, and glutamine 182. The active-site Proton donor/acceptor is the glutamate 138. The disordered stretch occupies residues arginine 174–aspartate 193.

This sequence belongs to the dCTP deaminase family. As to quaternary structure, homotrimer.

It carries out the reaction dCTP + H2O + H(+) = dUTP + NH4(+). It functions in the pathway pyrimidine metabolism; dUMP biosynthesis; dUMP from dCTP (dUTP route): step 1/2. Its function is as follows. Catalyzes the deamination of dCTP to dUTP. The polypeptide is dCTP deaminase (Shewanella sp. (strain W3-18-1)).